Reading from the N-terminus, the 83-residue chain is Small ribosomal subunit protein bS16 (83 aa).

Belongs to the bacterial ribosomal protein bS16 family.

The protein is Small ribosomal subunit protein bS16 of Borrelia duttonii (strain Ly).